The primary structure comprises 298 residues: N-acetylmuramic acid 6-phosphate etherase (298 aa).

The 164-residue stretch at 55–218 (IHAQVSGGGR…STGLMIKSGK (164 aa)) folds into the SIS domain. Catalysis depends on glutamate 83, which acts as the Proton donor. Residue glutamate 114 is part of the active site.

It belongs to the GCKR-like family. MurNAc-6-P etherase subfamily. Homodimer.

The enzyme catalyses N-acetyl-D-muramate 6-phosphate + H2O = N-acetyl-D-glucosamine 6-phosphate + (R)-lactate. It participates in amino-sugar metabolism; 1,6-anhydro-N-acetylmuramate degradation. Its pathway is amino-sugar metabolism; N-acetylmuramate degradation. The protein operates within cell wall biogenesis; peptidoglycan recycling. Its function is as follows. Specifically catalyzes the cleavage of the D-lactyl ether substituent of MurNAc 6-phosphate, producing GlcNAc 6-phosphate and D-lactate. Together with AnmK, is also required for the utilization of anhydro-N-acetylmuramic acid (anhMurNAc) either imported from the medium or derived from its own cell wall murein, and thus plays a role in cell wall recycling. In Shigella flexneri, this protein is N-acetylmuramic acid 6-phosphate etherase.